The sequence spans 284 residues: Putative ABC transporter ATP-binding protein PH1815 (284 aa).

Residues 4-244 form the ABC transporter domain; sequence IEVEDVSFRY…VEFLRTIGVK (241 aa). ATP is bound at residue 38–45; it reads GPSGSGKS.

The protein belongs to the ABC transporter superfamily.

It localises to the cell membrane. Its function is as follows. Probably part of an ABC transporter complex. Responsible for energy coupling to the transport system. This chain is Putative ABC transporter ATP-binding protein PH1815, found in Pyrococcus horikoshii (strain ATCC 700860 / DSM 12428 / JCM 9974 / NBRC 100139 / OT-3).